Consider the following 420-residue polypeptide: Succinate--CoA ligase [GDP-forming] subunit beta, mitochondrial (420 aa).

The region spanning 35-263 is the ATP-grasp domain; the sequence is KSLMDKYGVN…NASFRQKEIF (229 aa). GTP-binding positions include Q46, 78–80, and V135; that span reads GRG. Mg(2+)-binding residues include N232 and D246. Substrate contacts are provided by residues N297 and 354-356; that span reads GIM.

It belongs to the succinate/malate CoA ligase beta subunit family. GTP-specific subunit beta subfamily. As to quaternary structure, heterodimer of an alpha and a beta subunit. The beta subunit determines specificity for GTP. Requires Mg(2+) as cofactor.

It is found in the mitochondrion. The enzyme catalyses GTP + succinate + CoA = succinyl-CoA + GDP + phosphate. It functions in the pathway carbohydrate metabolism; tricarboxylic acid cycle; succinate from succinyl-CoA (ligase route): step 1/1. In terms of biological role, GTP-specific succinyl-CoA synthetase functions in the citric acid cycle (TCA), coupling the hydrolysis of succinyl-CoA to the synthesis of GTP and thus represents the only step of substrate-level phosphorylation in the TCA. The beta subunit provides nucleotide specificity of the enzyme and binds the substrate succinate, while the binding sites for coenzyme A and phosphate are found in the alpha subunit. This chain is Succinate--CoA ligase [GDP-forming] subunit beta, mitochondrial (scsB), found in Dictyostelium discoideum (Social amoeba).